The sequence spans 372 residues: Alpha-1-antitrypsin homolog (372 aa).

Positions 1 to 19 are cleaved as a signal peptide; it reads MPATCLLHTMLTLPSPSTR. N-linked (GlcNAc...) asparagine glycans are attached at residues Asn-214 and Asn-226. Positions 328 to 347 are RCL; the sequence is AATTIEIMPMSLPDTVILNR.

This sequence belongs to the serpin family.

It localises to the secreted. This is Alpha-1-antitrypsin homolog from Cyprinus carpio (Common carp).